The chain runs to 325 residues: Brain mitochondrial carrier protein 1 (325 aa).

6 consecutive transmembrane segments (helical) span residues 38-54 (GLNW…SIVA), 112-128 (LRQA…YQSL), 141-161 (LLIN…IANP), 199-215 (GVVP…GVEL), 240-256 (VSSF…SNPV), and 298-315 (GFWP…IFFI). Solcar repeat units follow at residues 42–131 (KPFV…LKRL), 139–224 (ETLL…TKKH), and 233–323 (DTIL…LKRL).

Belongs to the mitochondrial carrier (TC 2.A.29) family. As to quaternary structure, homotetramer. In terms of tissue distribution, mainly expressed in brain. Some expression in testis and pituitary.

The protein localises to the mitochondrion inner membrane. The enzyme catalyses sulfite(in) + sulfate(out) = sulfite(out) + sulfate(in). It carries out the reaction thiosulfate(in) + sulfate(out) = thiosulfate(out) + sulfate(in). It catalyses the reaction sulfate(out) + phosphate(in) = sulfate(in) + phosphate(out). The catalysed reaction is oxalate(in) + sulfate(out) = oxalate(out) + sulfate(in). The enzyme catalyses malonate(in) + sulfate(out) = malonate(out) + sulfate(in). It carries out the reaction maleate(in) + sulfate(out) = maleate(out) + sulfate(in). It catalyses the reaction (S)-malate(in) + sulfate(out) = (S)-malate(out) + sulfate(in). The catalysed reaction is (3S)-citramalate(in) + sulfate(out) = (3S)-citramalate(out) + sulfate(in). The enzyme catalyses (3R)-citramalate(in) + sulfate(out) = (3R)-citramalate(out) + sulfate(in). It carries out the reaction sulfate(out) + succinate(in) = sulfate(in) + succinate(out). It catalyses the reaction (S,S)-tartrate(in) + sulfate(out) = (S,S)-tartrate(out) + sulfate(in). The catalysed reaction is (2R,3R)-tartrate(in) + sulfate(out) = (2R,3R)-tartrate(out) + sulfate(in). The enzyme catalyses D-aspartate(in) + sulfate(out) = D-aspartate(out) + sulfate(in). It carries out the reaction L-aspartate(in) + sulfate(out) = L-aspartate(out) + sulfate(in). It catalyses the reaction sulfate(in) = sulfate(out). The catalysed reaction is phosphate(in) = phosphate(out). The enzyme catalyses (S)-malate(out) = (S)-malate(in). It carries out the reaction citrate(in) = citrate(out). It catalyses the reaction L-aspartate(out) = L-aspartate(in). The catalysed reaction is L-glutamate(out) = L-glutamate(in). The enzyme catalyses H(+)(in) = H(+)(out). It carries out the reaction chloride(in) = chloride(out). With respect to regulation, increased activity at pH lower than 8.0. sulfate/sulfate exchange activity is inhibited strongly by pyridoxal 5'-phosphate, bathophenanthroline and the organic mercurials mersalyl, p-chloromercuribenzoate and HgCl2. Proton conductance is activated by cardiolipin and long-chain free fatty acids and inhibited by purine nucleotides ATP and ADP. Chloride ion transporter activity is inhibited by long-chain free fatty acids. In terms of biological role, transports inorganic anions (sulfate, sulfite, thiosulfate and phosphate) and, to a lesser extent, a variety of dicarboxylates (e.g. malonate, malate and citramalate) and, even more so, aspartate and glutamate and tricarboxylates. May catalyze the export of sulfite and thiosulfate (the hydrogen sulfide degradation products) from the mitochondria, thereby modulating the level of the hydrogen sulfide. Also can mediate a very low unidirectional transport of anions including sulfate, phosphate, (S)-malate, citrate, L-aspartate and L-glutamate. Maintains oxidative balance (through uncoupling activities) and ATP production (by modifying mitochondrial membrane potential). Is able to transport protons across lipid membranes. Also exhibits transmembrane chloride transport activity to a lesser extent. May modify mitochondrial respiratory efficiency and mitochondrial oxidant production. This is Brain mitochondrial carrier protein 1 from Homo sapiens (Human).